We begin with the raw amino-acid sequence, 180 residues long: ATP synthase subunit delta (180 aa).

Belongs to the ATPase delta chain family. In terms of assembly, F-type ATPases have 2 components, F(1) - the catalytic core - and F(0) - the membrane proton channel. F(1) has five subunits: alpha(3), beta(3), gamma(1), delta(1), epsilon(1). CF(0) has four main subunits: a(1), b(1), b'(1) and c(10-14). The alpha and beta chains form an alternating ring which encloses part of the gamma chain. F(1) is attached to F(0) by a central stalk formed by the gamma and epsilon chains, while a peripheral stalk is formed by the delta, b and b' chains.

The protein localises to the cellular thylakoid membrane. Its function is as follows. F(1)F(0) ATP synthase produces ATP from ADP in the presence of a proton or sodium gradient. F-type ATPases consist of two structural domains, F(1) containing the extramembraneous catalytic core and F(0) containing the membrane proton channel, linked together by a central stalk and a peripheral stalk. During catalysis, ATP synthesis in the catalytic domain of F(1) is coupled via a rotary mechanism of the central stalk subunits to proton translocation. This protein is part of the stalk that links CF(0) to CF(1). It either transmits conformational changes from CF(0) to CF(1) or is implicated in proton conduction. The sequence is that of ATP synthase subunit delta from Synechococcus elongatus (strain ATCC 33912 / PCC 7942 / FACHB-805) (Anacystis nidulans R2).